Reading from the N-terminus, the 461-residue chain is Photosystem II CP43 reaction center protein (461 aa).

Residues 1 to 2 (ME) constitute a propeptide that is removed on maturation. Thr-3 is subject to N-acetylthreonine. The residue at position 3 (Thr-3) is a Phosphothreonine. Helical transmembrane passes span 57-81 (LFEV…PHLA), 122-143 (LLGP…KDRN), 166-188 (KALY…RKIT), 243-263 (KPFA…LSYS), and 279-300 (WFNN…ASQA). A [CaMn4O5] cluster-binding site is contributed by Glu-355. Residues 435–459 (RARAAAAGFEKGIDRDFEPVLSMTP) traverse the membrane as a helical segment.

Belongs to the PsbB/PsbC family. PsbC subfamily. As to quaternary structure, PSII is composed of 1 copy each of membrane proteins PsbA, PsbB, PsbC, PsbD, PsbE, PsbF, PsbH, PsbI, PsbJ, PsbK, PsbL, PsbM, PsbT, PsbX, PsbY, PsbZ, Psb30/Ycf12, at least 3 peripheral proteins of the oxygen-evolving complex and a large number of cofactors. It forms dimeric complexes. Requires Binds multiple chlorophylls and provides some of the ligands for the Ca-4Mn-5O cluster of the oxygen-evolving complex. It may also provide a ligand for a Cl- that is required for oxygen evolution. PSII binds additional chlorophylls, carotenoids and specific lipids. as cofactor.

The protein resides in the plastid. It is found in the chloroplast thylakoid membrane. One of the components of the core complex of photosystem II (PSII). It binds chlorophyll and helps catalyze the primary light-induced photochemical processes of PSII. PSII is a light-driven water:plastoquinone oxidoreductase, using light energy to abstract electrons from H(2)O, generating O(2) and a proton gradient subsequently used for ATP formation. The protein is Photosystem II CP43 reaction center protein of Nicotiana sylvestris (Wood tobacco).